Here is a 310-residue protein sequence, read N- to C-terminus: Putative sugar kinase PH1459 (310 aa).

The ATP site is built by Lys-194, Thr-219, and Gly-224.

The protein belongs to the carbohydrate kinase PfkB family.

The polypeptide is Putative sugar kinase PH1459 (Pyrococcus horikoshii (strain ATCC 700860 / DSM 12428 / JCM 9974 / NBRC 100139 / OT-3)).